The chain runs to 99 residues: NADH-quinone oxidoreductase subunit K (99 aa).

A run of 3 helical transmembrane segments spans residues 3 to 23 (PINYLYLSALLFTIGAAGVLL), 28 to 48 (IVMFMCVELMLNAVNLAFVTF), and 59 to 79 (MIAFFTMVVAACEVVIGLAII).

The protein belongs to the complex I subunit 4L family. As to quaternary structure, NDH-1 is composed of 14 different subunits. Subunits NuoA, H, J, K, L, M, N constitute the membrane sector of the complex.

The protein resides in the cell membrane. It catalyses the reaction a quinone + NADH + 5 H(+)(in) = a quinol + NAD(+) + 4 H(+)(out). Its function is as follows. NDH-1 shuttles electrons from NADH, via FMN and iron-sulfur (Fe-S) centers, to quinones in the respiratory chain. The immediate electron acceptor for the enzyme in this species is believed to be a menaquinone. Couples the redox reaction to proton translocation (for every two electrons transferred, four hydrogen ions are translocated across the cytoplasmic membrane), and thus conserves the redox energy in a proton gradient. This Mycobacterium avium (strain 104) protein is NADH-quinone oxidoreductase subunit K.